Consider the following 422-residue polypeptide: Osteomodulin (422 aa).

A signal peptide spans 1–20 (MGFSSLVCVLFFFLGVKVYC). A propeptide spanning residues 21 to 27 (QYESYQW) is cleaved from the precursor. Sulfotyrosine occurs at positions 22, 25, 31, 39, 51, and 77. Residues 53–91 (APFHQHTLGCASECFCPPNFPSSMYCDNRKLKTIPNIPA) enclose the LRRNT domain. LRR repeat units follow at residues 92–113 (HIQQ…SFIN), 116–129 (HLKE…KIKS), 142–164 (NLLQ…PKSL), 165–184 (ERIF…AVNG), 187–207 (NLTM…QEKV), 213–233 (KLMQ…GLPS), 234–255 (SLMY…YFNK), 258–280 (KLHA…FNLS), 281–294 (NLIE…KLKQ), 301–322 (NLEH…VMCP), and 331–353 (HLTH…IFLC). 2 N-linked (GlcNAc...) asparagine glycosylation sites follow: Asn113 and Asn121. N-linked (GlcNAc...) asparagine glycosylation occurs at Asn187. 2 N-linked (GlcNAc...) asparagine glycosylation sites follow: Asn242 and Asn278. N-linked (GlcNAc...) asparagine glycosylation is present at Asn316. A disulfide bridge connects residues Cys321 and Cys353. The segment at 385 to 422 (DDGDSEDHDDHHEGPEEEGTEENIDAHYYGSQEWQETI) is disordered. 2 positions are modified to sulfotyrosine: Tyr412 and Tyr413.

The protein belongs to the small leucine-rich proteoglycan (SLRP) family. SLRP class II subfamily. In terms of assembly, binds the alpha(V)beta(3)-integrin. Post-translationally, the N-terminus is blocked. In terms of processing, glycosylated; contains keratan sulfate. Sulfated on tyrosine residue(s). As to expression, bone specific (at protein level).

Its subcellular location is the secreted. It is found in the extracellular space. It localises to the extracellular matrix. Its function is as follows. May be implicated in biomineralization processes. Has a function in binding of osteoblasts via the alpha(V)beta(3)-integrin. In Bos taurus (Bovine), this protein is Osteomodulin (OMD).